A 102-amino-acid polypeptide reads, in one-letter code: Large ribosomal subunit protein uL24 (102 aa).

Belongs to the universal ribosomal protein uL24 family. Part of the 50S ribosomal subunit.

Functionally, one of two assembly initiator proteins, it binds directly to the 5'-end of the 23S rRNA, where it nucleates assembly of the 50S subunit. In terms of biological role, one of the proteins that surrounds the polypeptide exit tunnel on the outside of the subunit. This is Large ribosomal subunit protein uL24 from Ralstonia pickettii (strain 12J).